The sequence spans 302 residues: Tetrahydromethanopterin S-methyltransferase subunit E (302 aa).

The next 6 helical transmembrane spans lie at Pro-3–Ser-23, Pro-86–Val-106, Ile-132–Leu-152, Val-155–Gly-175, Pro-233–Phe-253, and Leu-259–Trp-279.

The protein belongs to the MtrE family. As to quaternary structure, the complex is composed of 8 subunits; MtrA, MtrB, MtrC, MtrD, MtrE, MtrF, MtrG and MtrH.

The protein localises to the cell membrane. The catalysed reaction is 5-methyl-5,6,7,8-tetrahydromethanopterin + coenzyme M + 2 Na(+)(in) = 5,6,7,8-tetrahydromethanopterin + methyl-coenzyme M + 2 Na(+)(out). The protein operates within one-carbon metabolism; methanogenesis from CO(2); methyl-coenzyme M from 5,10-methylene-5,6,7,8-tetrahydromethanopterin: step 2/2. In terms of biological role, part of a complex that catalyzes the formation of methyl-coenzyme M and tetrahydromethanopterin from coenzyme M and methyl-tetrahydromethanopterin. This is an energy-conserving, sodium-ion translocating step. The protein is Tetrahydromethanopterin S-methyltransferase subunit E of Methanosarcina barkeri (strain Fusaro / DSM 804).